Consider the following 424-residue polypeptide: Histidine--tRNA ligase (424 aa).

The protein belongs to the class-II aminoacyl-tRNA synthetase family. Homodimer.

It localises to the cytoplasm. The enzyme catalyses tRNA(His) + L-histidine + ATP = L-histidyl-tRNA(His) + AMP + diphosphate + H(+). In Bacillus licheniformis (strain ATCC 14580 / DSM 13 / JCM 2505 / CCUG 7422 / NBRC 12200 / NCIMB 9375 / NCTC 10341 / NRRL NRS-1264 / Gibson 46), this protein is Histidine--tRNA ligase.